A 99-amino-acid chain; its full sequence is UPF0235 protein AHA_3661 (99 aa).

This sequence belongs to the UPF0235 family.

In Aeromonas hydrophila subsp. hydrophila (strain ATCC 7966 / DSM 30187 / BCRC 13018 / CCUG 14551 / JCM 1027 / KCTC 2358 / NCIMB 9240 / NCTC 8049), this protein is UPF0235 protein AHA_3661.